Reading from the N-terminus, the 203-residue chain is Guanylate kinase (203 aa).

In terms of domain architecture, Guanylate kinase-like spans 3–181 (GTLYVVSAPS…TLADLQAIFT (179 aa)). An ATP-binding site is contributed by 10-17 (APSGAGKT).

The protein belongs to the guanylate kinase family.

Its subcellular location is the cytoplasm. It catalyses the reaction GMP + ATP = GDP + ADP. Its function is as follows. Essential for recycling GMP and indirectly, cGMP. The protein is Guanylate kinase of Alkalilimnicola ehrlichii (strain ATCC BAA-1101 / DSM 17681 / MLHE-1).